The following is a 244-amino-acid chain: Probable transcriptional regulatory protein CHY_1525 (244 aa).

Belongs to the TACO1 family.

It localises to the cytoplasm. This Carboxydothermus hydrogenoformans (strain ATCC BAA-161 / DSM 6008 / Z-2901) protein is Probable transcriptional regulatory protein CHY_1525.